A 199-amino-acid chain; its full sequence is NAD(P)H dehydrogenase (quinone) (199 aa).

In terms of domain architecture, Flavodoxin-like spans 4-190; sequence ILVLYYSTYG…DGARFQGRHV (187 aa). Residues 10 to 15 and 78 to 80 contribute to the FMN site; these read STYGHI and TRF. Residue tyrosine 12 participates in NAD(+) binding. Tryptophan 98 is a binding site for substrate. FMN-binding positions include 113 to 119 and histidine 134; that span reads STATQHG.

It belongs to the WrbA family. Requires FMN as cofactor.

The enzyme catalyses a quinone + NADH + H(+) = a quinol + NAD(+). The catalysed reaction is a quinone + NADPH + H(+) = a quinol + NADP(+). In Rhizorhabdus wittichii (strain DSM 6014 / CCUG 31198 / JCM 15750 / NBRC 105917 / EY 4224 / RW1) (Sphingomonas wittichii), this protein is NAD(P)H dehydrogenase (quinone).